The sequence spans 236 residues: Phosphoribosylformylglycinamidine synthase subunit PurQ (236 aa).

Positions 2 to 234 constitute a Glutamine amidotransferase type-1 domain; that stretch reads RFAVVTFPGS…LSVGLEVAHS (233 aa). Cys86 serves as the catalytic Nucleophile. Active-site residues include His203 and Glu205.

Part of the FGAM synthase complex composed of 1 PurL, 1 PurQ and 2 PurS subunits.

It is found in the cytoplasm. The enzyme catalyses N(2)-formyl-N(1)-(5-phospho-beta-D-ribosyl)glycinamide + L-glutamine + ATP + H2O = 2-formamido-N(1)-(5-O-phospho-beta-D-ribosyl)acetamidine + L-glutamate + ADP + phosphate + H(+). The catalysed reaction is L-glutamine + H2O = L-glutamate + NH4(+). The protein operates within purine metabolism; IMP biosynthesis via de novo pathway; 5-amino-1-(5-phospho-D-ribosyl)imidazole from N(2)-formyl-N(1)-(5-phospho-D-ribosyl)glycinamide: step 1/2. In terms of biological role, part of the phosphoribosylformylglycinamidine synthase complex involved in the purines biosynthetic pathway. Catalyzes the ATP-dependent conversion of formylglycinamide ribonucleotide (FGAR) and glutamine to yield formylglycinamidine ribonucleotide (FGAM) and glutamate. The FGAM synthase complex is composed of three subunits. PurQ produces an ammonia molecule by converting glutamine to glutamate. PurL transfers the ammonia molecule to FGAR to form FGAM in an ATP-dependent manner. PurS interacts with PurQ and PurL and is thought to assist in the transfer of the ammonia molecule from PurQ to PurL. The protein is Phosphoribosylformylglycinamidine synthase subunit PurQ of Thermomicrobium roseum (strain ATCC 27502 / DSM 5159 / P-2).